The sequence spans 131 residues: Small ribosomal subunit protein uS8 (131 aa).

This sequence belongs to the universal ribosomal protein uS8 family. In terms of assembly, part of the 30S ribosomal subunit. Contacts proteins S5 and S12.

Functionally, one of the primary rRNA binding proteins, it binds directly to 16S rRNA central domain where it helps coordinate assembly of the platform of the 30S subunit. In Campylobacter fetus subsp. fetus (strain 82-40), this protein is Small ribosomal subunit protein uS8.